A 376-amino-acid polypeptide reads, in one-letter code: Cysteine proteinase 2 (376 aa).

A signal peptide spans 1 to 18 (MRLLVFLILLIFVNFSFA). The propeptide at 19–122 (NVRPNGRRFS…EVLNVEDLQT (104 aa)) is activation peptide. Disulfide bonds link cysteine 144–cysteine 187, cysteine 178–cysteine 221, and cysteine 279–cysteine 365. The active site involves cysteine 147. Active-site residues include histidine 286 and asparagine 343.

It belongs to the peptidase C1 family.

Its subcellular location is the lysosome. In terms of biological role, cysteine proteinases 1 and 2 are believed to participate in the breakdown of protein during differentiation of Dictyostelium as a response to starvation. The sequence is that of Cysteine proteinase 2 (cprB) from Dictyostelium discoideum (Social amoeba).